A 227-amino-acid chain; its full sequence is Glial cell line-derived neurotrophic factor (227 aa).

An N-terminal signal peptide occupies residues 1–19; it reads MKLWAILAVCILLLSSVSS. The propeptide occupies 20 to 93; sequence IPLPSNWLAG…EFIQDTIKRL (74 aa). Disordered regions lie at residues 32-61 and 93-113; these read RSHL…ANMA and LKRS…QSLA. 3 cysteine pairs are disulfide-bonded: Cys134–Cys195, Cys161–Cys224, and Cys165–Cys226. 2 N-linked (GlcNAc...) asparagine glycosylation sites follow: Asn142 and Asn178.

Belongs to the TGF-beta family. GDNF subfamily. In terms of assembly, homodimer; disulfide-linked. Interacts with GFRA1 coreceptor and RET: forms a 2:2:2 ternary complex composed of GDNF ligand, GFRA1 and RET receptor. In terms of tissue distribution, from stage 22, expressed in somites and the pronephros. At stage 24 and 26, expressed in the pharyngeal arches I-III. At stage 31, expression in the eye, central nervous system and pharyngeal arches IV and V increases. Up to stage 34, expression becomes intense at the oral cavity and lateral line structures. At this stage, expression weakens in the pharyngeal arches, and increases in the epibranchial arches. Expressed in the digestive tract in stage 34 embryos.

Its subcellular location is the secreted. Functionally, neurotrophic factor that enhances survival and morphological differentiation of dopaminergic neurons and increases their high-affinity dopamine uptake. Acts by binding to its coreceptor, GFRA1, leading to autophosphorylation and activation of the RET receptor. The polypeptide is Glial cell line-derived neurotrophic factor (Xenopus laevis (African clawed frog)).